The primary structure comprises 902 residues: HTH-type transcriptional regulator MalT (902 aa).

Residue S39–T46 participates in ATP binding. One can recognise an HTH luxR-type domain in the interval E832–L897. The segment at residues N856–R875 is a DNA-binding region (H-T-H motif).

This sequence belongs to the MalT family. As to quaternary structure, monomer in solution. Oligomerizes to an active state in the presence of the positive effectors ATP and maltotriose.

With respect to regulation, activated by ATP and maltotriose, which are both required for DNA binding. Positively regulates the transcription of the maltose regulon whose gene products are responsible for uptake and catabolism of malto-oligosaccharides. Specifically binds to the promoter region of its target genes, recognizing a short DNA motif called the MalT box. The polypeptide is HTH-type transcriptional regulator MalT (Vibrio parahaemolyticus serotype O3:K6 (strain RIMD 2210633)).